The chain runs to 609 residues: Grainyhead-like protein 1 homolog (609 aa).

The segment at 1–91 is transcription activation; it reads MTQDYDNKRP…EHDHADHEHS (91 aa). The disordered stretch occupies residues 183-207; it reads SDHFTSNNQPPNSQRRTPDSTFSET. Residues 185–206 show a composition bias toward polar residues; that stretch reads HFTSNNQPPNSQRRTPDSTFSE. The region spanning 239–465 is the Grh/CP2 DB domain; that stretch reads AGNNFEYTLE…DLDTQPVLFI (227 aa). 2 interaction with DNA regions span residues 371–380 and 418–421; these read TDFSSQKGVK and RKIR.

It belongs to the grh/CP2 family. Grainyhead subfamily. Binds DNA as homodimer.

The protein resides in the nucleus. Functionally, transcription factor involved in epithelial development. Binds directly to the consensus DNA sequence 5'-AACCGGTT-3' and modulates expression of epidermal-specific genes, including XK81A1. Important regulator of DSG1 in the context of epidermal differentiation. Regulates the maintenance of skin barrier. No genetic interaction with GRHL3, nor functional cooperativity due to diverse target gene selectivity during epithelia development. Functions downstream of BMP-signaling cascade modulating endogenous bmp4-responsive targets. In Xenopus laevis (African clawed frog), this protein is Grainyhead-like protein 1 homolog.